A 384-amino-acid chain; its full sequence is Deoxyguanosinetriphosphate triphosphohydrolase-like protein (384 aa).

The interval Glu12–Phe39 is disordered. The segment covering His28 to Phe39 has biased composition (basic and acidic residues). Positions Arg73–Asn208 constitute an HD domain.

This sequence belongs to the dGTPase family. Type 2 subfamily.

This Bordetella parapertussis (strain 12822 / ATCC BAA-587 / NCTC 13253) protein is Deoxyguanosinetriphosphate triphosphohydrolase-like protein.